A 493-amino-acid polypeptide reads, in one-letter code: Glutamyl-tRNA(Gln) amidotransferase subunit A (493 aa).

Residues Lys78 and Ser158 each act as charge relay system in the active site. The Acyl-ester intermediate role is filled by Ser182.

The protein belongs to the amidase family. GatA subfamily. In terms of assembly, heterotrimer of A, B and C subunits.

The enzyme catalyses L-glutamyl-tRNA(Gln) + L-glutamine + ATP + H2O = L-glutaminyl-tRNA(Gln) + L-glutamate + ADP + phosphate + H(+). Allows the formation of correctly charged Gln-tRNA(Gln) through the transamidation of misacylated Glu-tRNA(Gln) in organisms which lack glutaminyl-tRNA synthetase. The reaction takes place in the presence of glutamine and ATP through an activated gamma-phospho-Glu-tRNA(Gln). The chain is Glutamyl-tRNA(Gln) amidotransferase subunit A from Methylocella silvestris (strain DSM 15510 / CIP 108128 / LMG 27833 / NCIMB 13906 / BL2).